The primary structure comprises 375 residues: Cyclic AMP receptor 2 (375 aa).

The Extracellular portion of the chain corresponds to 1-10 (MTIMSDIIAQ). Residues 11–30 (RTILLIADFSSIIGCSLVLI) form a helical membrane-spanning segment. At 31 to 44 (GFWRLKLLRNHITK) the chain is on the cytoplasmic side. Residues 45–65 (IISLFCATSLFKDVISTIITL) form a helical membrane-spanning segment. Residues 66–82 (LYKPDQTESGFPCYLHA) are Extracellular-facing. The helical transmembrane segment at 83 to 108 (IVITFGSLACWLWTLMLSFSIYNLIV) threads the bilayer. Topologically, residues 109–119 (RREPEPERFEK) are cytoplasmic. A helical transmembrane segment spans residues 120-138 (FYFCLCYGLPLISTIVMLS). Over 139–161 (THIIQPVGGWCWIGDNYDGYRFG) the chain is Extracellular. The chain crosses the membrane as a helical span at residues 162–180 (LFYGPFFFIWGTSAILVGL). Over 181-204 (TSKYTYSVIRSSVSDNKDKHMTYQ) the chain is Cytoplasmic. Ser192 bears the Phosphoserine mark. Residues 205-223 (FKLINYIVVFLVCWVFAIV) form a helical membrane-spanning segment. Over 224-234 (NRILNGLNQFP) the chain is Extracellular. A helical membrane pass occupies residues 235 to 259 (TVPNVLHTYFSVSHGFYASITFIYN). At 260-375 (NPLMWRYFGA…NNINNKNDMI (116 aa)) the chain is on the cytoplasmic side. 2 positions are modified to phosphoserine: Ser298 and Ser303. The interval 338–375 (PKENENQNHHHHHHHHHHHNHYNNNNNNNNINNKNDMI) is disordered. Residues 346–358 (HHHHHHHHHHHNH) show a composition bias toward basic residues. The segment covering 359–375 (YNNNNNNNNINNKNDMI) has biased composition (low complexity).

The protein belongs to the G-protein coupled receptor 5 family. In terms of processing, C-terminal Ser or Thr residues may be phosphorylated.

It is found in the membrane. Functionally, receptor for cAMP. Coordinates the aggregation of individual cells into a multicellular organism and regulates the expression of a large number of developmentally regulated genes. The activity of this receptor is mediated by G proteins. Plays a key role during tip formation and late development; involved in cAMP-directed patterning of pre stalk cells as they sort before and during tip formation. The sequence is that of Cyclic AMP receptor 2 (carB) from Dictyostelium discoideum (Social amoeba).